The sequence spans 148 residues: Large ribosomal subunit protein bL9 (148 aa).

This sequence belongs to the bacterial ribosomal protein bL9 family.

Its function is as follows. Binds to the 23S rRNA. This chain is Large ribosomal subunit protein bL9, found in Listeria monocytogenes serotype 4a (strain HCC23).